The following is a 434-amino-acid chain: Serine hydroxymethyltransferase (434 aa).

A (6S)-5,6,7,8-tetrahydrofolate-binding site is contributed by 120–122 (GHI). Lysine 236 carries the N6-(pyridoxal phosphate)lysine modification. Glutamate 255 is a (6S)-5,6,7,8-tetrahydrofolate binding site.

The protein belongs to the SHMT family. Homodimer. Pyridoxal 5'-phosphate serves as cofactor.

Its subcellular location is the cytoplasm. The protein operates within amino-acid biosynthesis; glycine biosynthesis; glycine from L-serine: step 1/1. Its function is as follows. Catalyzes the reversible interconversion of serine and glycine with a modified folate serving as the one-carbon carrier. Also exhibits a pteridine-independent aldolase activity toward beta-hydroxyamino acids, producing glycine and aldehydes, via a retro-aldol mechanism. The polypeptide is Serine hydroxymethyltransferase (Korarchaeum cryptofilum (strain OPF8)).